Here is a 622-residue protein sequence, read N- to C-terminus: MSSKSRRAGTATPQPGNTSTPRPPSAGPQPPPPSTHSQTASSPLSPTRHSRVAEKVELQNLNDRLATYIDRVRNLETENSRLTIEVQTTRDTVTRETTNIKNIFEAELLETRRLLDDTARDRARAEIDIKRLWEENEELKNKLDKKTKECTTAEGNVRMYESRANELNNKYNQANADRKKLNEDLNEALKELERLRKQFEETRKNLEQETLSRVDLENTIQSLREELSFKDQIHSQEINESRRIKQTEYSEIDGRLSSEYDAKLKQSLQELRAQYEEQMQINRDEIQSLYEDKIQRLQEAAARTSNSTHKSIEELRSTRVRIDALNANINELEQANADLNARIRDLERQLDNDRERHGQEIDLLEKELIRLREEMTQQLKEYQDLMDIKVSLDLEIAAYDKLLVGEEARLNITPATNTATVQSFSQSLRNSTRATPSRRTPSAAVKRKRAVVDESEDHSVADYYVSASAKGNVEIKEIDPEGKFVRLFNKGSEEVAIGGWQLQRLINEKGPSTTYKFHRSVRIEPNGVITVWSADTKASHEPPSSLVMKSQKWVSADNTRTILLNSEGEAVANLDRIKRIVSQHTSSSRLSRRRSVTAVDGNEQLYHQQGDPQQSNEKCAIM.

Positions 1–50 (MSSKSRRAGTATPQPGNTSTPRPPSAGPQPPPPSTHSQTASSPLSPTRHS) are disordered. S2 carries the post-translational modification N-acetylserine. The segment at 2–56 (SSKSRRAGTATPQPGNTSTPRPPSAGPQPPPPSTHSQTASSPLSPTRHSRVAEKV) is head. 3 positions are modified to phosphothreonine: T10, T12, and T20. Residues 21–34 (PRPPSAGPQPPPPS) are compositionally biased toward pro residues. Phosphoserine occurs at positions 25 and 34. Residue T39 is modified to Phosphothreonine. 3 positions are modified to phosphoserine: S41, S42, and S45. A Phosphothreonine modification is found at T47. In terms of domain architecture, IF rod spans 54–410 (EKVELQNLND…KLLVGEEARL (357 aa)). A coil 1A region spans residues 55–91 (KVELQNLNDRLATYIDRVRNLETENSRLTIEVQTTRD). The linker 1 stretch occupies residues 92-103 (TVTRETTNIKNI). Positions 104 to 241 (FEAELLETRR…QIHSQEINES (138 aa)) are coil 1B. S235 is subject to Phosphoserine. The segment at 242 to 265 (RRIKQTEYSEIDGRLSSEYDAKLK) is linker 2. A Phosphotyrosine modification is found at Y249. Phosphoserine occurs at positions 250 and 311. The interval 266–408 (QSLQELRAQY…YDKLLVGEEA (143 aa)) is coil 2. Residues 409–619 (RLNITPATNT…GDPQQSNEKC (211 aa)) are tail. Phosphothreonine occurs at positions 413 and 435. A compositionally biased stretch (polar residues) spans 429 to 440 (RNSTRATPSRRT). A disordered region spans residues 429–448 (RNSTRATPSRRTPSAAVKRK). S442 is subject to Phosphoserine. The Nuclear localization signal signature appears at 446–451 (KRKRAV). Phosphoserine occurs at positions 455 and 459. Positions 461–588 (ADYYVSASAK…RIVSQHTSSS (128 aa)) constitute an LTD domain. S595 carries the post-translational modification Phosphoserine. T597 carries the post-translational modification Phosphothreonine. The segment at 603–622 (EQLYHQQGDPQQSNEKCAIM) is disordered. Polar residues predominate over residues 605-622 (LYHQQGDPQQSNEKCAIM). Phosphoserine is present on S615. C619 bears the Cysteine methyl ester mark. C619 carries the S-farnesyl cysteine lipid modification. Positions 620–622 (AIM) are cleaved as a propeptide — removed in mature form.

This sequence belongs to the intermediate filament family. In terms of assembly, interacts directly with LBR. Interacts with MAN1. Interacts with Ote. Three forms of lamin have been identified in D.melanogaster, lamin Dm0 is rapidly processed to lamin Dm1 in the cytoplasm, Dm1 is then assembled in the nuclear envelope and is then phosphorylated, forming lamin Dm2. As to expression, constitutively expressed in all tissues (at protein level). Expressed in spermatocytes (at protein level).

Its subcellular location is the nucleus. It is found in the nucleus inner membrane. The protein resides in the nucleus envelope. The protein localises to the nucleus lamina. It localises to the cytoplasm. Its subcellular location is the cytoskeleton. It is found in the spindle pole. Functionally, lamins are components of the nuclear lamina, a fibrous layer on the nucleoplasmic side of the inner nuclear membrane, which is thought to provide a framework for the nuclear envelope and may also interact with chromatin. May have a role in the localization of the LEM domain proteins Ote, bocks and MAN1 to the nuclear membrane. In spermatocytes, plays a role in maintaining type-A lamin LamC nuclear localization; regulates meiotic cytokinesis by maintaining the structure of the spindle envelope, and by contributing to the formation of the contractile ring and central spindle. Required for nuclear migration and to link the microtubule organizing center (MTOC) to the nucleus. In addition, is required for nuclear envelope localization of klar. This is Lamin Dm0 from Drosophila melanogaster (Fruit fly).